The primary structure comprises 288 residues: HTH-type transcriptional regulator YofA (288 aa).

Residues 1 to 58 (MESGDLKIFQAVARKGSISKAAESLHYVQSNVTNRIQQLERQLQTQLFYRTNRGMTLT) form the HTH lysR-type domain. The segment at residues 18 to 37 (ISKAAESLHYVQSNVTNRIQ) is a DNA-binding region (H-T-H motif).

It belongs to the LysR transcriptional regulatory family.

The protein localises to the cytoplasm. Regulates expression of the cell division protein ftsW, and is essential for cell viability during stationary phase. This Bacillus velezensis (strain DSM 23117 / BGSC 10A6 / LMG 26770 / FZB42) (Bacillus amyloliquefaciens subsp. plantarum) protein is HTH-type transcriptional regulator YofA (yofA).